A 485-amino-acid polypeptide reads, in one-letter code: WD repeat-containing protein 13 (485 aa).

Ser-70, Ser-74, and Ser-79 each carry phosphoserine. Position 114 is an asymmetric dimethylarginine; alternate (Arg-114). Arg-114 is subject to Omega-N-methylarginine; alternate. WD repeat units lie at residues 170-210, 215-254, 302-341, 406-446, and 451-484; these read HVDE…PTVL, GHTRGVSDFAWSLSNDILVSTSLDATMRIWASEDGRCIRE, KLTGRVLALSFDAPGRLLWAGDDRGSVFSFLFDMATGKLT, HPVR…KAAV, and GHSAPVLDVSFNCDESLLASSDASGMVIVWRREQ.

It localises to the nucleus. The chain is WD repeat-containing protein 13 (WDR13) from Pongo abelii (Sumatran orangutan).